The chain runs to 78 residues: Large ribosomal subunit protein bL28 (78 aa).

Residues 1 to 25 (MSRVCQVTGKRPTVGNNRSHARNAT) form a disordered region.

Belongs to the bacterial ribosomal protein bL28 family.

In Alteromonas mediterranea (strain DSM 17117 / CIP 110805 / LMG 28347 / Deep ecotype), this protein is Large ribosomal subunit protein bL28.